The following is a 176-amino-acid chain: Lipoprotein signal peptidase (176 aa).

3 helical membrane passes run 12 to 32 (WYWV…WVLT), 67 to 87 (WQKW…TIWL), and 94 to 114 (VWRL…NLID). Catalysis depends on residues Asp-123 and Asp-141. A helical membrane pass occupies residues 133–153 (HFAAFNIADSAICIGAGLIIL).

It belongs to the peptidase A8 family.

The protein resides in the cell inner membrane. The enzyme catalyses Release of signal peptides from bacterial membrane prolipoproteins. Hydrolyzes -Xaa-Yaa-Zaa-|-(S,diacylglyceryl)Cys-, in which Xaa is hydrophobic (preferably Leu), and Yaa (Ala or Ser) and Zaa (Gly or Ala) have small, neutral side chains.. It functions in the pathway protein modification; lipoprotein biosynthesis (signal peptide cleavage). Its function is as follows. This protein specifically catalyzes the removal of signal peptides from prolipoproteins. This chain is Lipoprotein signal peptidase, found in Shewanella sediminis (strain HAW-EB3).